A 302-amino-acid chain; its full sequence is UDP-N-acetylenolpyruvoylglucosamine reductase (302 aa).

One can recognise an FAD-binding PCMH-type domain in the interval 31–196 (KIGGPADVLA…LRAWISLERG (166 aa)). Arginine 175 is an active-site residue. Residue serine 225 is the Proton donor of the active site. Glutamate 295 is an active-site residue.

This sequence belongs to the MurB family. Requires FAD as cofactor.

It localises to the cytoplasm. It carries out the reaction UDP-N-acetyl-alpha-D-muramate + NADP(+) = UDP-N-acetyl-3-O-(1-carboxyvinyl)-alpha-D-glucosamine + NADPH + H(+). The protein operates within cell wall biogenesis; peptidoglycan biosynthesis. Cell wall formation. The polypeptide is UDP-N-acetylenolpyruvoylglucosamine reductase (Caldanaerobacter subterraneus subsp. tengcongensis (strain DSM 15242 / JCM 11007 / NBRC 100824 / MB4) (Thermoanaerobacter tengcongensis)).